A 275-amino-acid polypeptide reads, in one-letter code: Phosphonoacetaldehyde hydrolase (275 aa).

D15 (nucleophile) is an active-site residue. D15 and A17 together coordinate Mg(2+). K56 functions as the Schiff-base intermediate with substrate in the catalytic mechanism. D189 contributes to the Mg(2+) binding site.

The protein belongs to the HAD-like hydrolase superfamily. PhnX family. In terms of assembly, homodimer. Requires Mg(2+) as cofactor.

It carries out the reaction phosphonoacetaldehyde + H2O = acetaldehyde + phosphate + H(+). In terms of biological role, involved in phosphonate degradation. The sequence is that of Phosphonoacetaldehyde hydrolase from Pseudomonas fluorescens (strain Pf0-1).